A 318-amino-acid chain; its full sequence is NADH-ubiquinone oxidoreductase chain 1 (318 aa).

8 helical membrane passes run 2-22 (FLVNLLLMIIPILLAVAFLTL), 70-90 (MFIMAPILALSLALTMWTPLP), 100-120 (LGVLFILAMSSLAVYSILWSG), 140-160 (ISYEVTLAIILLSVLLMSGSF), 172-192 (LWLIIPAWPLAMMWFISTLAE), 217-237 (GGSFALFFLAEYANIIMMNAI), 253-273 (EFYTTSFMIKTLLMTITFLWI), and 294-314 (LPLTLALCMWHVSIPILTASI).

Belongs to the complex I subunit 1 family. In terms of assembly, core subunit of respiratory chain NADH dehydrogenase (Complex I) which is composed of 45 different subunits.

It is found in the mitochondrion inner membrane. It catalyses the reaction a ubiquinone + NADH + 5 H(+)(in) = a ubiquinol + NAD(+) + 4 H(+)(out). In terms of biological role, core subunit of the mitochondrial membrane respiratory chain NADH dehydrogenase (Complex I) which catalyzes electron transfer from NADH through the respiratory chain, using ubiquinone as an electron acceptor. Essential for the catalytic activity and assembly of complex I. The sequence is that of NADH-ubiquinone oxidoreductase chain 1 (MT-ND1) from Emballonura alecto (Philippine sheath-tailed bat).